Reading from the N-terminus, the 351-residue chain is Phosphoribosylformylglycinamidine cyclo-ligase (351 aa).

It belongs to the AIR synthase family.

It localises to the cytoplasm. It catalyses the reaction 2-formamido-N(1)-(5-O-phospho-beta-D-ribosyl)acetamidine + ATP = 5-amino-1-(5-phospho-beta-D-ribosyl)imidazole + ADP + phosphate + H(+). The protein operates within purine metabolism; IMP biosynthesis via de novo pathway; 5-amino-1-(5-phospho-D-ribosyl)imidazole from N(2)-formyl-N(1)-(5-phospho-D-ribosyl)glycinamide: step 2/2. This is Phosphoribosylformylglycinamidine cyclo-ligase from Burkholderia cenocepacia (strain HI2424).